Here is a 286-residue protein sequence, read N- to C-terminus: Prohibitin-6, mitochondrial (286 aa).

The Mitochondrial matrix portion of the chain corresponds to 1–12 (MNFKNVKVPKGP). Residues 13–35 (GGGVIAAVVIGGLSLYGATHTLY) traverse the membrane as a helical; Signal-anchor for type II membrane protein segment. At 36–286 (NVDGGHRAIV…AMDLDVKPKK (251 aa)) the chain is on the mitochondrial intermembrane side.

The protein belongs to the prohibitin family. Component of a prohibitin multimeric complex in mitochondrial membranes. Mostly expressed in proliferative tissues, including vasculature, shoot and root apical tissues.

The protein localises to the mitochondrion inner membrane. In terms of biological role, prohibitin probably acts as a holdase/unfoldase for the stabilization of newly synthesized mitochondrial proteins. The protein is Prohibitin-6, mitochondrial (PHB6) of Arabidopsis thaliana (Mouse-ear cress).